Consider the following 705-residue polypeptide: Effector protein hopD1 (705 aa).

2 stretches are compositionally biased toward polar residues: residues 1-11 (MNPLRSIQHNI) and 28-41 (QAQQSHPKRISPSQ). Disordered regions lie at residues 1–41 (MNPL…SPSQ) and 173–207 (SSSLETPLLSSPDHSRPPSQPKPVHIGSVRRDSGS). Positions 173–184 (SSSLETPLLSSP) are enriched in low complexity.

Its subcellular location is the secreted. Its function is as follows. Effector protein involved in non-host recognition. This is Effector protein hopD1 (hopD1) from Pseudomonas syringae pv. tomato (strain ATCC BAA-871 / DC3000).